Reading from the N-terminus, the 241-residue chain is tRNA (guanine-N(7)-)-methyltransferase (241 aa).

Residues Gly61, Glu84, Arg86, Asn117, Ala118, and Leu137 each coordinate S-adenosyl-L-methionine. Asp140 is a catalytic residue. An alphaC helix region spans residues 141-149 (PHFKKTKHK). Positions 215 and 217 each coordinate S-adenosyl-L-methionine. Positions 215–223 (TEEGKKVQR) are alpha6 helix.

It belongs to the class I-like SAM-binding methyltransferase superfamily. TrmB family. As to quaternary structure, catalytic component of the METTL1-WDR4 complex, composed of mettl1 and wdr4.

It is found in the nucleus. The catalysed reaction is guanosine(46) in tRNA + S-adenosyl-L-methionine = N(7)-methylguanosine(46) in tRNA + S-adenosyl-L-homocysteine. It catalyses the reaction a guanosine in mRNA + S-adenosyl-L-methionine = an N(7)-methylguanosine in mRNA + S-adenosyl-L-homocysteine. It carries out the reaction a guanosine in miRNA + S-adenosyl-L-methionine = an N(7)-methylguanosine in miRNA + S-adenosyl-L-homocysteine. It functions in the pathway tRNA modification; N(7)-methylguanine-tRNA biosynthesis. Catalytic component of METTL1-WDR4 methyltransferase complex that mediates the formation of N(7)-methylguanine in a subset of RNA species, such as tRNAs, mRNAs and microRNAs (miRNAs). Catalyzes the formation of N(7)-methylguanine at position 46 (m7G46) in a large subset of tRNAs that contain the 5'-RAGGU-3' motif within the variable loop. M7G46 interacts with C13-G22 in the D-loop to stabilize tRNA tertiary structure and protect tRNAs from decay. Also acts as a methyltransferase for a subset of internal N(7)-methylguanine in mRNAs. Internal N(7)-methylguanine methylation of mRNAs in response to stress promotes their relocalization to stress granules, thereby suppressing their translation. Also methylates a specific subset of miRNAs. The protein is tRNA (guanine-N(7)-)-methyltransferase (mettl1) of Danio rerio (Zebrafish).